The sequence spans 418 residues: Queuine tRNA-ribosyltransferase accessory subunit 2 (418 aa).

The Zn(2+) site is built by cysteine 325, cysteine 327, cysteine 330, and histidine 356.

It belongs to the queuine tRNA-ribosyltransferase family. QTRT2 subfamily. Heterodimer of a catalytic subunit and an accessory subunit. Zn(2+) serves as cofactor.

It is found in the cytoplasm. Its function is as follows. Non-catalytic subunit of the queuine tRNA-ribosyltransferase (TGT) that catalyzes the base-exchange of a guanine (G) residue with queuine (Q) at position 34 (anticodon wobble position) in tRNAs with GU(N) anticodons (tRNA-Asp, -Asn, -His and -Tyr), resulting in the hypermodified nucleoside queuosine (7-(((4,5-cis-dihydroxy-2-cyclopenten-1-yl)amino)methyl)-7-deazaguanosine). This chain is Queuine tRNA-ribosyltransferase accessory subunit 2, found in Drosophila yakuba (Fruit fly).